The chain runs to 222 residues: 3,4-dihydroxy-2-butanone 4-phosphate synthase (222 aa).

Residues 37–38, D42, 150–154, and E174 contribute to the D-ribulose 5-phosphate site; these read RE and RPGHT. Residue E38 participates in Mg(2+) binding. H153 is a Mg(2+) binding site.

It belongs to the DHBP synthase family. In terms of assembly, homodimer. Requires Mg(2+) as cofactor. Mn(2+) is required as a cofactor.

The enzyme catalyses D-ribulose 5-phosphate = (2S)-2-hydroxy-3-oxobutyl phosphate + formate + H(+). Its pathway is cofactor biosynthesis; riboflavin biosynthesis; 2-hydroxy-3-oxobutyl phosphate from D-ribulose 5-phosphate: step 1/1. Catalyzes the conversion of D-ribulose 5-phosphate to formate and 3,4-dihydroxy-2-butanone 4-phosphate. The sequence is that of 3,4-dihydroxy-2-butanone 4-phosphate synthase from Chlorobium limicola (strain DSM 245 / NBRC 103803 / 6330).